Consider the following 405-residue polypeptide: NADH-quinone oxidoreductase subunit D (405 aa).

It belongs to the complex I 49 kDa subunit family. NDH-1 is composed of 14 different subunits. Subunits NuoB, C, D, E, F, and G constitute the peripheral sector of the complex.

The protein resides in the cell inner membrane. It catalyses the reaction a quinone + NADH + 5 H(+)(in) = a quinol + NAD(+) + 4 H(+)(out). Functionally, NDH-1 shuttles electrons from NADH, via FMN and iron-sulfur (Fe-S) centers, to quinones in the respiratory chain. The immediate electron acceptor for the enzyme in this species is believed to be ubiquinone. Couples the redox reaction to proton translocation (for every two electrons transferred, four hydrogen ions are translocated across the cytoplasmic membrane), and thus conserves the redox energy in a proton gradient. The sequence is that of NADH-quinone oxidoreductase subunit D from Ruegeria pomeroyi (strain ATCC 700808 / DSM 15171 / DSS-3) (Silicibacter pomeroyi).